We begin with the raw amino-acid sequence, 382 residues long: MATTSLASAFCSMKAVMLARDGRGMKPRSSDLQLRAGNAQTSLKMINGTKFSYTESLKKLPDWSMLFAVITTIFSAAEKQWTNLEWKPKPNPPQLLDDHFGPHGLVFRRTFAIRSYEVGPDRSTSIVAVMNHLQEAALNHAKSVGILGDGFGTTLEMSKRDLIWVVKRTHVAVERYPAWGDTVEVECWVGASGNNGRRHDFLVRDCKTGEILTRCTSLSVMMNTRTRRLSKIPEEVRGEIGPAFIDNVAVKDEEIKKPQKLNDSTADYIQGGLTPRWNDLDINQHVNNIKYVDWILETVPDSIFESHHISSFTIEYRRECTMDSVLQSLTTVSGGSSEAGLVCEHLLQLEGGSEVLRAKTEWRPKLTDSFRGISVIPAESSV.

Residues 1–83 constitute a chloroplast transit peptide; that stretch reads MATTSLASAF…FSAAEKQWTN (83 aa). Catalysis depends on residues N283, H285, and C320.

Belongs to the acyl-ACP thioesterase family.

It is found in the plastid. The protein resides in the chloroplast. The enzyme catalyses dodecanoyl-[ACP] + H2O = dodecanoate + holo-[ACP] + H(+). Its function is as follows. Plays an essential role in chain termination during de novo fatty acid synthesis. High thioesterase activity for myristoyl-ACP. In Cinnamomum camphora (Camphor tree), this protein is Dodecanoyl-[acyl-carrier-protein] hydrolase, chloroplastic.